The primary structure comprises 393 residues: Protein TsgA (393 aa).

12 consecutive transmembrane segments (helical) span residues 11-31, 51-71, 78-98, 101-121, 134-154, 162-182, 206-226, 245-265, 273-293, 297-317, 332-352, and 361-381; these read WISF…GMVM, FLNA…EIVP, FGFL…SLAL, TAMF…TFLI, LLFT…IAAF, WYWV…LTFG, IGVL…LGFI, TLVS…SFIL, ILTV…TGTP, AWSI…IITL, FVLT…GPIV, and LLTA…LGFV.

This sequence belongs to the major facilitator superfamily. TsgA family.

The protein localises to the cell inner membrane. This is Protein TsgA from Shigella boydii serotype 4 (strain Sb227).